Reading from the N-terminus, the 520-residue chain is Keratin, type II cytoskeletal 78 (520 aa).

The segment at 1-110 is head; it reads MSLSPCRAQR…DPQFQVVRTQ (110 aa). The tract at residues 111–146 is coil 1A; it reads ETQEIRTLNNQFASFIDKVRFLEQQNKVLETKWHLL. The IF rod domain occupies 111-424; that stretch reads ETQEIRTLNN…RLLEGEECRM (314 aa). A linker 1 region spans residues 147 to 165; that stretch reads QQQGLSGSQQGLEPVFEAC. The segment at 166–258 is coil 1B; the sequence is LDQLRKQLEQ…LNEEELGQLQ (93 aa). The tract at residues 259–281 is linker 12; that stretch reads TQASDTSVVLSMDNNRYLDFSSI. The coil 2 stretch occupies residues 282–421; the sequence is ITEVRARYEE…TYRRLLEGEE (140 aa). A tail region spans residues 422 to 520; the sequence is CRMSGECTSQ…ESSLKTSITY (99 aa).

It belongs to the intermediate filament family. In terms of assembly, heterotetramer of two type I and two type II keratins. In terms of tissue distribution, in non-keratinising esophageal and vaginal epithelium, strongly expressed in the basal and parabasal/lower suprabasal cell layers with considerably decreased expression in the mid/upper suprabasal layers (at protein level). A similar gradient from basal to lower suprabasal layers is seen in the partially keratinised dorsal tongue epithelium, in the scalp and in the plantar epidermis (at protein level). Extension of expression into the suprabasal compartments is distinctly more pronounced in non-keratinising epithelia than in keratinising epithelia and epidermis (at protein level). In scalp sections, present in the interfollicular epidermis and infundibulum including the entire outer root sheath of the hair follicles and also in the sebocytes (at protein level). In sweat glands, expressed in peripheral and luminal cells of the lower duct and in peripheral cells of the middle/upper duct with no expression observed in luminal cells (at protein level). In embryos at the 14th week of pregnancy, detected in basal and parabasal layers but is absent from the uppermost epidermal layer (at protein level). Expressed in tongue epithelium.

The polypeptide is Keratin, type II cytoskeletal 78 (KRT78) (Homo sapiens (Human)).